A 313-amino-acid polypeptide reads, in one-letter code: Metaxin-3 (313 aa).

The segment at 280–313 (EKMDDNLRSSPQHRPHRHEAKPSAPASDRNSTPA) is disordered.

This sequence belongs to the metaxin family. Part of a large protein complex spanning both mitochondrial membranes termed the mitochondrial intermembrane space bridging (MIB) complex.

The protein resides in the mitochondrion. The protein localises to the mitochondrion outer membrane. Could function in transport of proteins into the mitochondrion. This Danio rerio (Zebrafish) protein is Metaxin-3 (mtx3).